Consider the following 379-residue polypeptide: uncharacterized protein (379 aa).

It belongs to the glycosyltransferase 28 family.

This is an uncharacterized protein from Methanosarcina mazei (strain ATCC BAA-159 / DSM 3647 / Goe1 / Go1 / JCM 11833 / OCM 88) (Methanosarcina frisia).